The chain runs to 337 residues: Transaldolase (337 aa).

Positions 1 to 10 match the Nuclear localization signal motif; the sequence is MSGSPVKRQR. Residue Lys115 is modified to N6-acetyllysine. Catalysis depends on Lys142, which acts as the Schiff-base intermediate with substrate. N6-acetyllysine is present on Lys219. Ser237 and Ser256 each carry phosphoserine. N6-acetyllysine occurs at positions 269, 286, and 321.

It belongs to the transaldolase family. Type 1 subfamily. In terms of assembly, homodimer. Interacts with KPNA1 and KPNA4.

The protein resides in the nucleus. The protein localises to the cytoplasm. The enzyme catalyses D-sedoheptulose 7-phosphate + D-glyceraldehyde 3-phosphate = D-erythrose 4-phosphate + beta-D-fructose 6-phosphate. Its pathway is carbohydrate degradation; pentose phosphate pathway; D-glyceraldehyde 3-phosphate and beta-D-fructose 6-phosphate from D-ribose 5-phosphate and D-xylulose 5-phosphate (non-oxidative stage): step 2/3. Catalyzes the rate-limiting step of the non-oxidative phase in the pentose phosphate pathway. Catalyzes the reversible conversion of sedheptulose-7-phosphate and D-glyceraldehyde 3-phosphate into erythrose-4-phosphate and beta-D-fructose 6-phosphate. This chain is Transaldolase (Taldo1), found in Rattus norvegicus (Rat).